A 371-amino-acid polypeptide reads, in one-letter code: Queuine tRNA-ribosyltransferase (371 aa).

The active-site Proton acceptor is Asp90. Substrate-binding positions include 90–94, Asp144, Gln189, and Gly215; that span reads DSGGF. An RNA binding region spans residues 246–252; the sequence is GVGTPEN. Asp265 acts as the Nucleophile in catalysis. The interval 270-274 is RNA binding; important for wobble base 34 recognition; that stretch reads TRNAR. Zn(2+)-binding residues include Cys303, Cys305, Cys308, and His334.

Belongs to the queuine tRNA-ribosyltransferase family. Homodimer. Within each dimer, one monomer is responsible for RNA recognition and catalysis, while the other monomer binds to the replacement base PreQ1. It depends on Zn(2+) as a cofactor.

It catalyses the reaction 7-aminomethyl-7-carbaguanine + guanosine(34) in tRNA = 7-aminomethyl-7-carbaguanosine(34) in tRNA + guanine. The protein operates within tRNA modification; tRNA-queuosine biosynthesis. Functionally, catalyzes the base-exchange of a guanine (G) residue with the queuine precursor 7-aminomethyl-7-deazaguanine (PreQ1) at position 34 (anticodon wobble position) in tRNAs with GU(N) anticodons (tRNA-Asp, -Asn, -His and -Tyr). Catalysis occurs through a double-displacement mechanism. The nucleophile active site attacks the C1' of nucleotide 34 to detach the guanine base from the RNA, forming a covalent enzyme-RNA intermediate. The proton acceptor active site deprotonates the incoming PreQ1, allowing a nucleophilic attack on the C1' of the ribose to form the product. After dissociation, two additional enzymatic reactions on the tRNA convert PreQ1 to queuine (Q), resulting in the hypermodified nucleoside queuosine (7-(((4,5-cis-dihydroxy-2-cyclopenten-1-yl)amino)methyl)-7-deazaguanosine). The protein is Queuine tRNA-ribosyltransferase of Helicobacter pylori (strain Shi470).